Consider the following 501-residue polypeptide: MRERITFIQKQGDSIEPTTLKIKGGVLNGPEIQAAREDRLTIAIDELPKDLQALLGTAHELHIRYVSSQPYEAITPLLARLPPGFHLFYTPAGQADATSPALCLALNQIFGNVQCENPEKSFTTLPRDRFSHSAAYQFYQPSVDLSPFIALVKEKLCSSSKDQSCAARADRLANASSLDISYDAISHAVKLTATWPYQKQEVHATSRPQTRTEVGVLNSDRPGHLEPHELGISGLLTVLGQDKKPSATMFAFASRHRDAESSFSAEFLEPTGLHPTLKLRLESSKPPIEDAYCSPHAYFTLPKTIFADRHQLSDDLFLASKNLTGLRYISQPVDLEAPEYVEKRWGSSLLLELSPPEHEESKSWTVQVPLHLRYLSPAEGGYTDIQVPYPAVFWACAAEEGTKFPNNPFEKANLGYDGLFGPRTVFWHVEPRPTIGSRLSNMIKVPVLDTNKAEWVSGGTGLAVLLGFAWIMWKLFGVLSKSGYQNQPSQAAEVVKAKKNQ.

At 1-458 (MRERITFIQK…DTNKAEWVSG (458 aa)) the chain is on the lumenal side. N-linked (GlcNAc...) asparagine glycans are attached at residues asparagine 174 and asparagine 322. A helical membrane pass occupies residues 459–479 (GTGLAVLLGFAWIMWKLFGVL). At 480–501 (SKSGYQNQPSQAAEVVKAKKNQ) the chain is on the cytoplasmic side.

This sequence belongs to the PIGX family.

It is found in the endoplasmic reticulum membrane. Its pathway is glycolipid biosynthesis; glycosylphosphatidylinositol-anchor biosynthesis. Required for proper folding and/or the stability of a subset of proteins in the endoplasmic reticulum. Component of glycosylphosphatidylinositol-mannosyltransferase 1 which transfers the first of the 4 mannoses in the GPI-anchor precursors during GPI-anchor biosynthesis. Probably acts by stabilizing the mannosyltransferase gim-1/gpi14. The chain is Protein pbn1 (pbn1) from Neurospora crassa (strain ATCC 24698 / 74-OR23-1A / CBS 708.71 / DSM 1257 / FGSC 987).